The chain runs to 631 residues: Putative ATP-dependent DNA helicase Q1 (631 aa).

In terms of domain architecture, Helicase ATP-binding spans 118–293 (INAVMSKEDA…KDMLGIQAAL (176 aa)). Residue 131–138 (LSTGGGKS) coordinates ATP. Positions 237 to 240 (DEVH) match the DEVH box motif. Residues 318-466 (CTEEIAKTIK…NLYNMVRYAA (149 aa)) form the Helicase C-terminal domain. Zn(2+) is bound by residues cysteine 471, cysteine 489, cysteine 493, and cysteine 496. The disordered stretch occupies residues 610–631 (ESKSRKRKASSSVEEEDVMVLD). Residues 622-631 (VEEEDVMVLD) are compositionally biased toward acidic residues.

Belongs to the helicase family. RecQ subfamily. Zn(2+) is required as a cofactor.

Its subcellular location is the nucleus. It catalyses the reaction Couples ATP hydrolysis with the unwinding of duplex DNA by translocating in the 3'-5' direction.. It carries out the reaction ATP + H2O = ADP + phosphate + H(+). Its function is as follows. DNA helicase that may play a role in the repair of DNA that is damaged by ultraviolet light or other mutagens. Exhibits a magnesium-dependent ATP-dependent DNA-helicase activity that unwinds single- and double-stranded DNA in a 3'-5' direction. In Caenorhabditis elegans, this protein is Putative ATP-dependent DNA helicase Q1.